A 200-amino-acid polypeptide reads, in one-letter code: Max dimerization protein 3 (200 aa).

2 disordered regions span residues 31–56 and 133–164; these read SILPCDPATPGRRKRQRTNSNPDNVR and RLLPPNTERIRTDSLDSSNLSSERSDSDQEDL. In terms of domain architecture, bHLH spans 54–106; it reads NVRSVHNELEKHRRAQLRRCLEQLKQQVPLSMENSRHTTLSLLHRAKQHIKKL.

In terms of assembly, efficient DNA binding requires dimerization with another bHLH protein. Binds DNA as a heterodimer with MAX. As to expression, expressed broadly throughout the CNS and the eye, starting at neurula stages.

It is found in the nucleus. Functionally, transcriptional repressor. Binds with MAX to form a sequence-specific DNA-binding protein complex which recognizes the core sequence 5'-CAC[GA]TG-3'. The sequence is that of Max dimerization protein 3 (mxd3) from Xenopus laevis (African clawed frog).